Reading from the N-terminus, the 421-residue chain is Gamma-glutamyl phosphate reductase (421 aa).

It belongs to the gamma-glutamyl phosphate reductase family.

It is found in the cytoplasm. It catalyses the reaction L-glutamate 5-semialdehyde + phosphate + NADP(+) = L-glutamyl 5-phosphate + NADPH + H(+). It functions in the pathway amino-acid biosynthesis; L-proline biosynthesis; L-glutamate 5-semialdehyde from L-glutamate: step 2/2. In terms of biological role, catalyzes the NADPH-dependent reduction of L-glutamate 5-phosphate into L-glutamate 5-semialdehyde and phosphate. The product spontaneously undergoes cyclization to form 1-pyrroline-5-carboxylate. The polypeptide is Gamma-glutamyl phosphate reductase (Pseudomonas paraeruginosa (strain DSM 24068 / PA7) (Pseudomonas aeruginosa (strain PA7))).